The sequence spans 424 residues: MTILKKKKKGSPQITPDERYRELDSHAQNESEIQEDVPISRKIANFLKLAYNEIRENISIYLLIIVYLCVCVMNKLLAKRTLKKIGNYSFVTSETHNCICMVVFFALYFMFGRRVMSAKERHRNFGVQFLLISLLDACSVIIAFIGLTRTTGNIQSFVMQLSIPINMFFCFLILRYRYHLFNYVGAFIIVVTIAVVEFMLSFETQEENSIVFNLVLIASLIPLSFSNMTREIVFKKYKINILRLNAVVSFFQIFTSCLMLPMYTLPFLKQINLPFSEIGTNIKNGFRCLFLGQNTIVENCGLGMSKMCDDCEGAWKTFIAYSFFNICDNLITSFIIEKFSTMTYTIVSCIQGPAIAIAYYFKFLAGDAVMQPRMLDFVTLFGYLFGSIIYRIGNIILEKKRMMEAGNDDDSEGELTNADSIITH.

A compositionally biased stretch (basic residues) spans 1–10; that stretch reads MTILKKKKKG. Residues 1 to 32 are disordered; sequence MTILKKKKKGSPQITPDERYRELDSHAQNESE. Residues 1 to 57 lie on the Cytoplasmic side of the membrane; sequence MTILKKKKKGSPQITPDERYRELDSHAQNESEIQEDVPISRKIANFLKLAYNEIREN. Basic and acidic residues predominate over residues 16–29; that stretch reads PDERYRELDSHAQN. Residues 58–78 traverse the membrane as a helical segment; sequence ISIYLLIIVYLCVCVMNKLLA. The Vacuolar segment spans residues 79-89; that stretch reads KRTLKKIGNYS. An N-linked (GlcNAc...) asparagine glycan is attached at Asn87. Residues 90–110 form a helical membrane-spanning segment; that stretch reads FVTSETHNCICMVVFFALYFM. Residues 111–124 lie on the Cytoplasmic side of the membrane; sequence FGRRVMSAKERHRN. A helical membrane pass occupies residues 125–145; sequence FGVQFLLISLLDACSVIIAFI. The Vacuolar segment spans residues 146–153; that stretch reads GLTRTTGN. Residues 154–174 form a helical membrane-spanning segment; that stretch reads IQSFVMQLSIPINMFFCFLIL. Residues 175–179 lie on the Cytoplasmic side of the membrane; it reads RYRYH. Residues 180–200 form a helical membrane-spanning segment; the sequence is LFNYVGAFIIVVTIAVVEFML. Over 201–208 the chain is Vacuolar; it reads SFETQEEN. The chain crosses the membrane as a helical span at residues 209–229; it reads SIVFNLVLIASLIPLSFSNMT. Residues 230 to 246 are Cytoplasmic-facing; that stretch reads REIVFKKYKINILRLNA. A helical transmembrane segment spans residues 247 to 267; that stretch reads VVSFFQIFTSCLMLPMYTLPF. The Vacuolar segment spans residues 268–316; the sequence is LKQINLPFSEIGTNIKNGFRCLFLGQNTIVENCGLGMSKMCDDCEGAWK. 2 disulfide bridges follow: Cys288–Cys311 and Cys300–Cys308. Residues 317-337 traverse the membrane as a helical segment; sequence TFIAYSFFNICDNLITSFIIE. The Cytoplasmic portion of the chain corresponds to 338 to 345; sequence KFSTMTYT. A helical transmembrane segment spans residues 346–366; sequence IVSCIQGPAIAIAYYFKFLAG. The Vacuolar segment spans residues 367 to 376; that stretch reads DAVMQPRMLD. The chain crosses the membrane as a helical span at residues 377–397; it reads FVTLFGYLFGSIIYRIGNIIL. Over 398-424 the chain is Cytoplasmic; it reads EKKRMMEAGNDDDSEGELTNADSIITH.

This sequence belongs to the CRT-like transporter family.

Its subcellular location is the vacuole membrane. Nutrient transporter. Involved in maintaining the osmotic homeostasis of the digestive vacuole. The sequence is that of Chloroquine resistance transporter from Plasmodium vivax (strain Salvador I).